The primary structure comprises 1628 residues: Lysine-specific histone demethylase 1 homolog 3 (1628 aa).

A disordered region spans residues 1 to 71 (MDGKEKKSGS…KKLSALGKDS (71 aa)). The segment covering 19–28 (FDDDADDDEP) has biased composition (acidic residues). Over residues 43-64 (KDKVETESTGKQRQKQVVEKKL) the composition is skewed to basic and acidic residues. The region spanning 378–478 (GRAAAVTAGL…AGISSVNGKA (101 aa)) is the SWIRM domain. FAD contacts are provided by E647, R649, R655, and E1077. Residues 1271–1317 (SGKKSLRQANTTNTSRIRRKLNSPDTDSKGKLSNGNDVKTDEEFEDN) are disordered.

It belongs to the flavin monoamine oxidase family. It depends on FAD as a cofactor.

Functionally, probable histone demethylase that reduces the levels of histone H3 'Lys-4' methylation in chromatin. The polypeptide is Lysine-specific histone demethylase 1 homolog 3 (LDL3) (Arabidopsis thaliana (Mouse-ear cress)).